Consider the following 1291-residue polypeptide: Cytoplasmic FMR1-interacting protein (1291 aa).

Positions 1269 to 1291 are disordered; it reads HPSVISSSSHYQDPQKLRQSMNN. A compositionally biased stretch (polar residues) spans 1271-1291; sequence SVISSSSHYQDPQKLRQSMNN.

Belongs to the CYFIP family. Interacts with Fmr1 and Rac1. Component of the WAVE complex composed of Hem/Kette, Scar/Wave and Cyfip where it binds through its C-terminus directly to Hem.

It is found in the cytoplasm. Its function is as follows. Plays a role in guidance and morphology of central and peripheral axons and in synaptic morphology. Also required for formation of cell membrane protrusions and for bristle development. The polypeptide is Cytoplasmic FMR1-interacting protein (Drosophila pseudoobscura pseudoobscura (Fruit fly)).